A 663-amino-acid chain; its full sequence is Protein THEMIS2 (663 aa).

CABIT regions lie at residues 2-237 (EPVP…TASS) and 238-515 (QHIH…EAEG). Residues 545–663 (ASESQAPPPR…DMDDHDYEEI (119 aa)) are disordered. Residues 559–577 (QGINKKQQNIQSCKESSVK) show a composition bias toward polar residues. Thr596 bears the Phosphothreonine mark. Over residues 621–641 (NPQTQNSVLSMKPKTSSSLGK) the composition is skewed to polar residues. Residues 653 to 663 (PDMDDHDYEEI) show a composition bias toward acidic residues. A Phosphotyrosine modification is found at Tyr660.

This sequence belongs to the themis family. Interacts with VAV1. Interacts with LAT. Interacts constitutively with GRB2, LYN and PLCG2; these interactions increase the activation of PLCG2 and its downstream pathways following B cell receptor stimulation. Phosphorylation at Tyr-660 is induced by LPS. Phosphorylated by Src kinases (Lck or Fyn) following BCR engagement. In terms of tissue distribution, expressed in both developing and mature B-cells with high expression in immature, follicular and B1 B cells. Also expressed in macrophages and dendritic cells. Down-regulated in splenocytes of mice developing arthritis in a collagen-induced model, not in those of mice failing to develop the disease. Transiently down-regulated in splenocytes of mice infected with influenza virus.

It is found in the nucleus. The protein localises to the cytoplasm. Functionally, may constitute a control point in macrophage inflammatory response, promoting LPS-induced TLR4-mediated TNF production. Determines the threshold for activation of B cells by low-affinity and low-avidity ligands via PLCG2 activation and its downstream pathways. This Mus musculus (Mouse) protein is Protein THEMIS2.